Here is a 376-residue protein sequence, read N- to C-terminus: Putative glutamate--cysteine ligase 2 (376 aa).

This sequence belongs to the glutamate--cysteine ligase type 2 family. YbdK subfamily.

The enzyme catalyses L-cysteine + L-glutamate + ATP = gamma-L-glutamyl-L-cysteine + ADP + phosphate + H(+). In terms of biological role, ATP-dependent carboxylate-amine ligase which exhibits weak glutamate--cysteine ligase activity. The polypeptide is Putative glutamate--cysteine ligase 2 (Mycolicibacterium paratuberculosis (strain ATCC BAA-968 / K-10) (Mycobacterium paratuberculosis)).